Reading from the N-terminus, the 197-residue chain is Small ribosomal subunit protein uS4c (197 aa).

The S4 RNA-binding domain occupies 82–143 (MRLDNILFRL…KQRSKALIQN (62 aa)).

It belongs to the universal ribosomal protein uS4 family. In terms of assembly, part of the 30S ribosomal subunit. Contacts protein S5. The interaction surface between S4 and S5 is involved in control of translational fidelity.

The protein localises to the plastid. The protein resides in the chloroplast. One of the primary rRNA binding proteins, it binds directly to 16S rRNA where it nucleates assembly of the body of the 30S subunit. Its function is as follows. With S5 and S12 plays an important role in translational accuracy. This is Small ribosomal subunit protein uS4c (rps4) from Gladiolus papilio (Goldblotch gladiolus).